Consider the following 129-residue polypeptide: Type II secretion system protein I (129 aa).

Positions Met1 to Gly6 are cleaved as a propeptide — leader sequence. Phe7 is subject to N-methylphenylalanine. A helical membrane pass occupies residues Phe7–Leu27.

This sequence belongs to the GSP I family. In terms of assembly, type II secretion is composed of four main components: the outer membrane complex, the inner membrane complex, the cytoplasmic secretion ATPase and the periplasm-spanning pseudopilus. Forms the tip of the type II pseudopilus by interacting with XcpU, XcpW and XcpX. Interacts with core component XcpT. In terms of processing, cleaved by prepilin peptidase. Methylated by prepilin peptidase at the amino group of the N-terminal phenylalanine once the leader sequence is cleaved by prepilin peptidase.

It is found in the cell inner membrane. Functionally, component of the type II secretion system required for the energy-dependent secretion of extracellular factors such as proteases and toxins from the periplasm. Part of the pseudopilus tip complex that is critical for the recognition and binding of secretion substrates. Type II pseudopilus confers increased bacterial adhesive capabilities. This is Type II secretion system protein I (xcpV) from Pseudomonas aeruginosa (strain ATCC 15692 / DSM 22644 / CIP 104116 / JCM 14847 / LMG 12228 / 1C / PRS 101 / PAO1).